The primary structure comprises 506 residues: Pyruvate kinase 2 (506 aa).

The residue at position 24 (serine 24) is a Phosphoserine. Substrate is bound at residue arginine 51. 4 residues coordinate K(+): asparagine 53, serine 55, aspartate 86, and threonine 87. 53-56 contacts ATP; the sequence is NFSH. The ATP site is built by arginine 93 and lysine 179. Glutamate 244 serves as a coordination point for Mg(2+). Residues glycine 267, aspartate 268, and threonine 300 each coordinate substrate. Mg(2+) is bound at residue aspartate 268.

Belongs to the pyruvate kinase family. As to quaternary structure, homotetramer. The cofactor is Mg(2+). It depends on K(+) as a cofactor.

It catalyses the reaction pyruvate + ATP = phosphoenolpyruvate + ADP + H(+). It participates in carbohydrate degradation; glycolysis; pyruvate from D-glyceraldehyde 3-phosphate: step 5/5. With respect to regulation, not activated by fructose-1,6-bisphosphate. In terms of biological role, may be used by cells under conditions in which the level of glycolytic flux is very low. This Saccharomyces cerevisiae (strain ATCC 204508 / S288c) (Baker's yeast) protein is Pyruvate kinase 2 (PYK2).